A 97-amino-acid chain; its full sequence is Small ribosomal subunit protein bS16c (97 aa).

This sequence belongs to the bacterial ribosomal protein bS16 family.

It localises to the plastid. Its subcellular location is the chloroplast. This Piper cenocladum (Ant piper) protein is Small ribosomal subunit protein bS16c.